Reading from the N-terminus, the 310-residue chain is Protein translocase subunit SecF (310 aa).

6 helical membrane passes run 20 to 42, 140 to 160, 164 to 184, 194 to 214, 246 to 266, and 272 to 292; these read FKKVSYTFSIILSLISVISIGIY, IEAGTMAMLFSFLAIMVYIWV, WYFGLGILIALMHDLILALGF, LSTIAAVLTIIGYSVNDSVVI, ILTVITTLLANLALILFGGEA, and VLVFFGIIAGTYSSIFISAPI.

Belongs to the SecD/SecF family. SecF subfamily. In terms of assembly, forms a complex with SecD. Part of the essential Sec protein translocation apparatus which comprises SecA, SecYEG and auxiliary proteins SecDF-YajC and YidC.

It is found in the cell inner membrane. Its function is as follows. Part of the Sec protein translocase complex. Interacts with the SecYEG preprotein conducting channel. SecDF uses the proton motive force (PMF) to complete protein translocation after the ATP-dependent function of SecA. The chain is Protein translocase subunit SecF from Rickettsia canadensis (strain McKiel).